Reading from the N-terminus, the 62-residue chain is Metallothionein-4 (62 aa).

Residues Cys-6, Cys-8, Cys-14, Cys-16, Cys-20, Cys-22, Cys-25, Cys-27, Cys-30, Cys-34, Cys-35, Cys-37, Cys-38, Cys-42, Cys-45, Cys-49, Cys-51, Cys-58, Cys-60, and Cys-61 each coordinate a divalent metal cation.

It belongs to the metallothionein superfamily. Type 1 family.

In terms of biological role, seems to bind zinc and copper. Could play a special role in regulating zinc metabolism during the differentiation of stratified epithelia. This is Metallothionein-4 (MT4) from Canis lupus familiaris (Dog).